Reading from the N-terminus, the 187-residue chain is Large ribosomal subunit protein bL25 (187 aa).

It belongs to the bacterial ribosomal protein bL25 family. CTC subfamily. As to quaternary structure, part of the 50S ribosomal subunit; part of the 5S rRNA/L5/L18/L25 subcomplex. Contacts the 5S rRNA. Binds to the 5S rRNA independently of L5 and L18.

Functionally, this is one of the proteins that binds to the 5S RNA in the ribosome where it forms part of the central protuberance. The polypeptide is Large ribosomal subunit protein bL25 (Tropheryma whipplei (strain TW08/27) (Whipple's bacillus)).